The following is a 357-amino-acid chain: Sorbitol dehydrogenase (357 aa).

Alanine 2 carries the N-acetylalanine modification. Zn(2+) is bound at residue cysteine 45. Tyrosine 51 provides a ligand contact to substrate. Positions 70 and 71 each coordinate Zn(2+). Glutamate 156 is a binding site for substrate. Residue serine 169 is modified to Phosphoserine. NAD(+)-binding positions include valine 184, aspartate 204, arginine 209, 273–275 (VGM), and 297–299 (VFR). Substrate contacts are provided by arginine 299 and tyrosine 300.

This sequence belongs to the zinc-containing alcohol dehydrogenase family. As to quaternary structure, homotetramer. Zn(2+) is required as a cofactor. As to expression, testis has the highest level of expression, followed by kidney, liver, and lung. Low levels of expression are also observed in lens, brain, and skeletal muscle. Expressed in sperm flagellum and very low expression in the sperm head.

The protein localises to the mitochondrion membrane. It localises to the cell projection. The protein resides in the cilium. It is found in the flagellum. The catalysed reaction is keto-D-fructose + NADH + H(+) = D-sorbitol + NAD(+). The enzyme catalyses xylitol + NAD(+) = D-xylulose + NADH + H(+). It catalyses the reaction L-iditol + NAD(+) = keto-L-sorbose + NADH + H(+). Its activity is regulated as follows. Inhibited in vitro by p-hydroxymercuribenzoate, EDTA, l,l0-phenanthroline and N-ethylmaleimide. Polyol dehydrogenase that catalyzes the reversible NAD(+)-dependent oxidation of various sugar alcohols. Is active with D-sorbitol (D-glucitol) leading to the C2-oxidized product D-fructose. Is a key enzyme in the polyol pathway that interconverts glucose and fructose via sorbitol, which constitutes an important alternate route for glucose metabolism. May play a role in sperm motility by using sorbitol as an alternative energy source for sperm motility and protein tyrosine phosphorylation. Has no activity on ethanol. Cannot use NADP(+) as the electron acceptor. The protein is Sorbitol dehydrogenase (Sord) of Mus musculus (Mouse).